Reading from the N-terminus, the 460-residue chain is Bifunctional protein GlmU (460 aa).

Residues 1-229 (MSHYAIILAA…FEESLGVNDR (229 aa)) are pyrophosphorylase. UDP-N-acetyl-alpha-D-glucosamine is bound by residues 8–11 (LAAG), K22, Q72, and 77–78 (GT). D102 serves as a coordination point for Mg(2+). The UDP-N-acetyl-alpha-D-glucosamine site is built by G139, E154, N169, and N227. Residue N227 participates in Mg(2+) binding. The linker stretch occupies residues 230–250 (VALATAEDVMRRRINKAHMIN). Positions 251-460 (GVTFQNPNAT…KKPHHPSQQK (210 aa)) are N-acetyltransferase. UDP-N-acetyl-alpha-D-glucosamine contacts are provided by R332 and K350. H362 functions as the Proton acceptor in the catalytic mechanism. Residues Y365 and N376 each contribute to the UDP-N-acetyl-alpha-D-glucosamine site. Residues A379, 385–386 (NY), S404, A422, and R439 each bind acetyl-CoA.

It in the N-terminal section; belongs to the N-acetylglucosamine-1-phosphate uridyltransferase family. The protein in the C-terminal section; belongs to the transferase hexapeptide repeat family. In terms of assembly, homotrimer. It depends on Mg(2+) as a cofactor.

The protein resides in the cytoplasm. It catalyses the reaction alpha-D-glucosamine 1-phosphate + acetyl-CoA = N-acetyl-alpha-D-glucosamine 1-phosphate + CoA + H(+). The enzyme catalyses N-acetyl-alpha-D-glucosamine 1-phosphate + UTP + H(+) = UDP-N-acetyl-alpha-D-glucosamine + diphosphate. Its pathway is nucleotide-sugar biosynthesis; UDP-N-acetyl-alpha-D-glucosamine biosynthesis; N-acetyl-alpha-D-glucosamine 1-phosphate from alpha-D-glucosamine 6-phosphate (route II): step 2/2. It functions in the pathway nucleotide-sugar biosynthesis; UDP-N-acetyl-alpha-D-glucosamine biosynthesis; UDP-N-acetyl-alpha-D-glucosamine from N-acetyl-alpha-D-glucosamine 1-phosphate: step 1/1. It participates in bacterial outer membrane biogenesis; LPS lipid A biosynthesis. Catalyzes the last two sequential reactions in the de novo biosynthetic pathway for UDP-N-acetylglucosamine (UDP-GlcNAc). The C-terminal domain catalyzes the transfer of acetyl group from acetyl coenzyme A to glucosamine-1-phosphate (GlcN-1-P) to produce N-acetylglucosamine-1-phosphate (GlcNAc-1-P), which is converted into UDP-GlcNAc by the transfer of uridine 5-monophosphate (from uridine 5-triphosphate), a reaction catalyzed by the N-terminal domain. This Streptococcus thermophilus (strain CNRZ 1066) protein is Bifunctional protein GlmU.